A 288-amino-acid polypeptide reads, in one-letter code: ATP synthase gamma chain (288 aa).

It belongs to the ATPase gamma chain family. In terms of assembly, F-type ATPases have 2 components, CF(1) - the catalytic core - and CF(0) - the membrane proton channel. CF(1) has five subunits: alpha(3), beta(3), gamma(1), delta(1), epsilon(1). CF(0) has three main subunits: a, b and c.

Its subcellular location is the cell inner membrane. In terms of biological role, produces ATP from ADP in the presence of a proton gradient across the membrane. The gamma chain is believed to be important in regulating ATPase activity and the flow of protons through the CF(0) complex. The protein is ATP synthase gamma chain of Polaromonas sp. (strain JS666 / ATCC BAA-500).